A 216-amino-acid chain; its full sequence is ATP-dependent Clp protease proteolytic subunit (216 aa).

The active-site Nucleophile is S101. H126 is a catalytic residue.

This sequence belongs to the peptidase S14 family. As to quaternary structure, component of the chloroplastic Clp protease core complex.

The protein resides in the plastid. It is found in the chloroplast stroma. The catalysed reaction is Hydrolysis of proteins to small peptides in the presence of ATP and magnesium. alpha-casein is the usual test substrate. In the absence of ATP, only oligopeptides shorter than five residues are hydrolyzed (such as succinyl-Leu-Tyr-|-NHMec, and Leu-Tyr-Leu-|-Tyr-Trp, in which cleavage of the -Tyr-|-Leu- and -Tyr-|-Trp bonds also occurs).. In terms of biological role, cleaves peptides in various proteins in a process that requires ATP hydrolysis. Has a chymotrypsin-like activity. Plays a major role in the degradation of misfolded proteins. The chain is ATP-dependent Clp protease proteolytic subunit from Zea mays (Maize).